A 506-amino-acid chain; its full sequence is Probable cytochrome P450 519E1 (506 aa).

Residues M1–K21 form a helical membrane-spanning segment. C453 is a heme binding site.

This sequence belongs to the cytochrome P450 family. Requires heme as cofactor.

The protein resides in the membrane. This Dictyostelium discoideum (Social amoeba) protein is Probable cytochrome P450 519E1 (cyp519E1).